A 127-amino-acid chain; its full sequence is Small ribosomal subunit protein uS12 (127 aa).

Asp89 is modified (3-methylthioaspartic acid).

This sequence belongs to the universal ribosomal protein uS12 family. In terms of assembly, part of the 30S ribosomal subunit. Contacts proteins S8 and S17. May interact with IF1 in the 30S initiation complex.

Functionally, with S4 and S5 plays an important role in translational accuracy. Interacts with and stabilizes bases of the 16S rRNA that are involved in tRNA selection in the A site and with the mRNA backbone. Located at the interface of the 30S and 50S subunits, it traverses the body of the 30S subunit contacting proteins on the other side and probably holding the rRNA structure together. The combined cluster of proteins S8, S12 and S17 appears to hold together the shoulder and platform of the 30S subunit. The polypeptide is Small ribosomal subunit protein uS12 (Campylobacter fetus subsp. fetus (strain 82-40)).